The following is a 641-amino-acid chain: MAVIGALPKEVAEAVSASRLLVVGAGGIGCELLKNLVLTGFTNLDVIDLDTIDVSNLNRQFLFQKKHVGRSKAQVAKESVLQFCPDANITAYHDSIMNPDYNVEFFKQFTMAMNALDNNAARNHVNRMCLAAGIPLIESGTAGYLGQVSVIKKGVTECYECQPKPTQKTFPGCTIRNTPSEPIHCIVWAKYLFNQLFGEEDADQEVAPDIADPEAAWDPTKAAERANASNVDGDIKRVSTKQWAKSTGYDPIKLFNKLFRDDIKYLLTMDRLWRKRKPPIPLEWASLHNKENCSEIQNESSLLGLKDQKVLNVASYAQLFSKSVETLREQLREKGDGAELVWDKDDVPAMDFVTAAANLRMHIFSMNMKSKFDVKSMAGNIIPAIATTNAVISGLIVLEGLKILSGNTEQCRTVFLNKQPNPRKKLLVPCSLDPPNPSCYVCAIKPEVTVKLNVHKVTVQMLQDKILKEKFAMVAPDVQIEDGKGTILISSEAGETDANNHRKISEFGIRNSSQLQADDFLQDYTLMMNILHSDEMEKDVDFEVVGDVPEKGPQKPPEESVKNITNGSDDGAQPSTSKAQDQDDVLIVDSDEESPSSSNADVGMESASLKRKLPDEEAVSSTKRKRIEPPVEEDDDIIALD.

ATP contacts are provided by residues 24 to 29, D48, 56 to 59, K72, 95 to 96, and 117 to 122; these read GAGGIG, NLNR, SI, and DNNAAR. Residues C158 and C161 each contribute to the Zn(2+) site. C173 acts as the Glycyl thioester intermediate in catalysis. Zn(2+) contacts are provided by C439 and C442. The tract at residues 546 to 641 is disordered; that stretch reads GDVPEKGPQK…EEDDDIIALD (96 aa). Residues 548 to 561 show a composition bias toward basic and acidic residues; it reads VPEKGPQKPPEESV. The span at 562–579 shows a compositional bias: polar residues; the sequence is KNITNGSDDGAQPSTSKA. 2 stretches are compositionally biased toward acidic residues: residues 582-594 and 630-641; these read QDDVLIVDSDEES and PVEEDDDIIALD.

Belongs to the ubiquitin-activating E1 family. As to quaternary structure, heterodimer of sae1 and uba2/sae2. The heterodimer corresponds to the two domains that are encoded on a single polypeptide chain in ubiquitin-activating enzyme E1. Interacts with ube2i.

It is found in the nucleus. It participates in protein modification; protein sumoylation. Its function is as follows. The heterodimer acts as an E1 ligase for sumo1, sumo2, and sumo3. It mediates ATP-dependent activation of sumo proteins followed by formation of a thioester bond between a sumo protein and a conserved active site cysteine residue on uba2/sae2. This is SUMO-activating enzyme subunit 2-A (uba2-a) from Xenopus laevis (African clawed frog).